A 560-amino-acid polypeptide reads, in one-letter code: uncharacterized protein (560 aa).

Residues 1 to 29 form the signal peptide; the sequence is MKSALKKSVVSTSISLILASGMAAFAAHA. Asp-66, Asp-67, and Ser-132 together coordinate Ca(2+). The active-site Nucleophile is the Ser-132. Residue Ser-132 is modified to 3-oxoalanine (Ser). His-185 is an active-site residue. Ca(2+)-binding residues include Asp-345 and Asn-346.

The protein belongs to the sulfatase family. Requires Ca(2+) as cofactor. The conversion to 3-oxoalanine (also known as C-formylglycine, FGly), of a serine or cysteine residue in prokaryotes and of a cysteine residue in eukaryotes, is critical for catalytic activity.

This is an uncharacterized protein from Escherichia coli (strain K12).